We begin with the raw amino-acid sequence, 365 residues long: Testis-specific serine/threonine-protein kinase 1 (365 aa).

The Protein kinase domain occupies 12-272 (YIMGINLGEG…IDEILNHCWV (261 aa)). ATP is bound by residues 18-26 (LGEGSYAKV) and Lys-41. Catalysis depends on Asp-136, which acts as the Proton acceptor. Thr-174 carries the phosphothreonine modification. Residues 282 to 365 (GAINKEGESS…HPQQPSETHT (84 aa)) form a disordered region. Residues 303–330 (GADKKSATKLEPREEARSEARSESKPQE) show a composition bias toward basic and acidic residues. Residues 331 to 347 (DTLQVVRQSENVGLSSE) show a composition bias toward polar residues.

Belongs to the protein kinase superfamily. CAMK Ser/Thr protein kinase family. As to quaternary structure, interacts with TSSK2. Interacts with HSP90; this interaction stabilizes TSSK1. Mg(2+) is required as a cofactor. Post-translationally, autophosphorylated. Ubiquitinated; HSP90 activity negatively regulates ubiquitination and degradation. In terms of tissue distribution, testis-specific. Expressed only in postmeiotic spermatids at the final stages of cytodifferentiation in the seminiferous tubules (at protein level). Not detected in released sperms in the lumen of the seminiferous tubules and the epididymis.

The protein resides in the cytoplasm. The protein localises to the cytoplasmic vesicle. Its subcellular location is the secretory vesicle. It localises to the acrosome. It is found in the cell projection. The protein resides in the cilium. The protein localises to the flagellum. The catalysed reaction is L-seryl-[protein] + ATP = O-phospho-L-seryl-[protein] + ADP + H(+). The enzyme catalyses L-threonyl-[protein] + ATP = O-phospho-L-threonyl-[protein] + ADP + H(+). Activated by phosphorylation on Thr-174, potentially by autophosphorylation. Functionally, testis-specific serine/threonine-protein kinase required during spermatid development. Phosphorylates 'Ser-281' of TSKS. Involved in the late stages of spermatogenesis, during the reconstruction of the cytoplasm. During spermatogenesis, required for the transformation of a ring-shaped structure around the base of the flagellum originating from the chromatoid body. This is Testis-specific serine/threonine-protein kinase 1 (Tssk1b) from Mus musculus (Mouse).